Reading from the N-terminus, the 465-residue chain is 3-isopropylmalate dehydratase large subunit (465 aa).

Cys347, Cys407, and Cys410 together coordinate [4Fe-4S] cluster.

It belongs to the aconitase/IPM isomerase family. LeuC type 1 subfamily. As to quaternary structure, heterodimer of LeuC and LeuD. [4Fe-4S] cluster serves as cofactor.

It carries out the reaction (2R,3S)-3-isopropylmalate = (2S)-2-isopropylmalate. Its pathway is amino-acid biosynthesis; L-leucine biosynthesis; L-leucine from 3-methyl-2-oxobutanoate: step 2/4. Its function is as follows. Catalyzes the isomerization between 2-isopropylmalate and 3-isopropylmalate, via the formation of 2-isopropylmaleate. In Tolumonas auensis (strain DSM 9187 / NBRC 110442 / TA 4), this protein is 3-isopropylmalate dehydratase large subunit.